The following is a 285-amino-acid chain: Hypersensitive-induced reaction 1 protein (285 aa).

Glycine 2 is lipidated: N-myristoyl glycine. Residues 118–190 (FEQKNEIAKS…EKILQIKRAE (73 aa)) are a coiled coil.

In terms of assembly, homo- and heterodimer. Interacts with LRR1 (via LRR domain). As to expression, constitutively expressed in stems, roots and flowers, but not in leaves and fruits.

Positive regulator of hypersensitive response (HR)-like cell death. May be involved in potassium ion channel regulation. The sequence is that of Hypersensitive-induced reaction 1 protein from Capsicum annuum (Capsicum pepper).